Reading from the N-terminus, the 932-residue chain is Protocadherin gamma-A6 (932 aa).

The first 29 residues, 1 to 29 (MAPPQRHPQRSEQVLLLTLLGTLWGAAAA), serve as a signal peptide directing secretion. Cadherin domains lie at 30–133 (QIRY…TPRF), 134–242 (LKEE…TPVF), 243–347 (TQPV…VPEV), 348–452 (VVTS…PPTF), 453–562 (PHSS…APEI), and 570–682 (DGST…EPSA). At 30–692 (QIRYSIPEEL…KPNDSDLTLY (663 aa)) the chain is on the extracellular side. N-linked (GlcNAc...) asparagine glycosylation occurs at Asn81. N-linked (GlcNAc...) asparagine glycans are attached at residues Asn419 and Asn545. Asn685 carries an N-linked (GlcNAc...) asparagine glycan. The helical transmembrane segment at 693–713 (LVVAVAAVSCVFLAFVIVLLA) threads the bilayer. Residues 714 to 932 (LRLQRWHKSR…KKKSGKKEKK (219 aa)) lie on the Cytoplasmic side of the membrane. Disordered stretches follow at residues 803 to 841 (DPRQLQQAPPNTDWRFSQAQRPGTSGSQNGDDTGTWPNN) and 902 to 932 (ATLTNAAGKRDGKAPAGGNGNKKKSGKKEKK). Over residues 806–841 (QLQQAPPNTDWRFSQAQRPGTSGSQNGDDTGTWPNN) the composition is skewed to polar residues. A compositionally biased stretch (basic residues) spans 922–932 (NKKKSGKKEKK).

It is found in the cell membrane. Potential calcium-dependent cell-adhesion protein. May be involved in the establishment and maintenance of specific neuronal connections in the brain. The chain is Protocadherin gamma-A6 (PCDHGA6) from Pan troglodytes (Chimpanzee).